The primary structure comprises 228 residues: Fluoride-specific ion channel FluC (228 aa).

Helical transmembrane passes span 3–23, 37–57, 72–92, 101–121, 141–161, 172–192, and 202–222; these read LSLFAIALGGAAGALARFWVS, GTLFINVSGSFLMGFLSVMMI, VGFLGAYTTFSTFSLETLALF, ALNVLLSVVLCLAAVWVGAVL, IFGAACGMSLLAGFAAALAFA, LVLVALTGLVVVGTLVALVVT, and LWGAFTLSAFAAVVFLSLGLV. Na(+) is bound by residues glycine 76 and threonine 79.

The protein belongs to the fluoride channel Fluc/FEX (TC 1.A.43) family.

It localises to the cell inner membrane. It catalyses the reaction fluoride(in) = fluoride(out). Na(+) is not transported, but it plays an essential structural role and its presence is essential for fluoride channel function. Its function is as follows. Fluoride-specific ion channel. Important for reducing fluoride concentration in the cell, thus reducing its toxicity. The polypeptide is Fluoride-specific ion channel FluC (Methylococcus capsulatus (strain ATCC 33009 / NCIMB 11132 / Bath)).